Reading from the N-terminus, the 463-residue chain is MTKPFSVVLASLLAITSTVSPLASAQQSQPLDRIAAIVDEDVVLQSELDRAVRNVKSQYAGRENQLPPDDVLQRQVLERLVLVKLQVSRADGNGIRVSDEELNRAIASIAQQNGTTVDGLRQKLAADGMGYADFRASVRDEIIVQRLRQSFAQSRISVSEGEVDTALAQQAATGSQYHLAHILIGLPEGATAEQIATGQKKVDGVKALIDKGELDFSAAAVRYSDSPNALEGGDLGWRSLDEIPNAFAQLIRDMQPGQVAGPLRGPSGFQLLKLVEMRDANAGGEKKMVTEYHARHILVRIGENQTEAQAKAKIDTIRARIVGGADFQATAKESSEDTNSRGQGGDLGWFPADAFGPDFGKQVESLTDGAVSEPFRTQAGWHIVQRVGSRQTDVSAENQRAQVRETIGRRKLEEEYNRYLQELRGEAYVSYRTGDRADDNATAAPAKSADPAAPSPPPAKPTR.

The N-terminal stretch at 1-25 (MTKPFSVVLASLLAITSTVSPLASA) is a signal peptide. PpiC domains follow at residues 174 to 276 (GSQY…KLVE) and 289 to 388 (VTEY…QRVG). Disordered stretches follow at residues 328-348 (QATA…GDLG) and 432-463 (RTGD…KPTR). Residues 440–452 (NATAAPAKSADPA) show a composition bias toward low complexity. Over residues 453 to 463 (APSPPPAKPTR) the composition is skewed to pro residues.

It localises to the periplasm. It carries out the reaction [protein]-peptidylproline (omega=180) = [protein]-peptidylproline (omega=0). Functionally, chaperone involved in the correct folding and assembly of outer membrane proteins. Recognizes specific patterns of aromatic residues and the orientation of their side chains, which are found more frequently in integral outer membrane proteins. May act in both early periplasmic and late outer membrane-associated steps of protein maturation. The protein is Chaperone SurA of Xanthomonas euvesicatoria pv. vesicatoria (strain 85-10) (Xanthomonas campestris pv. vesicatoria).